The chain runs to 212 residues: Eggshell protein 1 (212 aa).

A signal peptide spans 1–27; it reads MKSSLTLLFLAAIGYTIAYPPPSDYDS. Positions 155 to 212 are disordered; sequence RKNGHGKGGKGGNGGGGGKGGGKGGGNGKGNGKGGGGKNGGGKGGNGGKGGSYAPSYY. Residues 163–205 show a composition bias toward gly residues; that stretch reads GKGGNGGGGGKGGGKGGGNGKGNGKGGGGKNGGGKGGNGGKGG.

As to expression, detected only in mature female parasites.

The protein is Eggshell protein 1 (ESG-1) of Schistosoma japonicum (Blood fluke).